A 289-amino-acid chain; its full sequence is Bifunctional protein FolD (289 aa).

Residues 165–167 (GAS) and S190 each bind NADP(+).

This sequence belongs to the tetrahydrofolate dehydrogenase/cyclohydrolase family. As to quaternary structure, homodimer.

It catalyses the reaction (6R)-5,10-methylene-5,6,7,8-tetrahydrofolate + NADP(+) = (6R)-5,10-methenyltetrahydrofolate + NADPH. The catalysed reaction is (6R)-5,10-methenyltetrahydrofolate + H2O = (6R)-10-formyltetrahydrofolate + H(+). It functions in the pathway one-carbon metabolism; tetrahydrofolate interconversion. Catalyzes the oxidation of 5,10-methylenetetrahydrofolate to 5,10-methenyltetrahydrofolate and then the hydrolysis of 5,10-methenyltetrahydrofolate to 10-formyltetrahydrofolate. This Ralstonia nicotianae (strain ATCC BAA-1114 / GMI1000) (Ralstonia solanacearum) protein is Bifunctional protein FolD.